Here is a 337-residue protein sequence, read N- to C-terminus: Fructose-1,6-bisphosphatase class 1 (337 aa).

Mg(2+) is bound by residues glutamate 89, aspartate 112, leucine 114, and aspartate 115. Substrate is bound by residues 115 to 118 (DGSS), asparagine 208, tyrosine 241, and lysine 271. Glutamate 277 provides a ligand contact to Mg(2+).

Belongs to the FBPase class 1 family. In terms of assembly, homotetramer. Requires Mg(2+) as cofactor.

Its subcellular location is the cytoplasm. The catalysed reaction is beta-D-fructose 1,6-bisphosphate + H2O = beta-D-fructose 6-phosphate + phosphate. The protein operates within carbohydrate biosynthesis; gluconeogenesis. The sequence is that of Fructose-1,6-bisphosphatase class 1 from Yersinia enterocolitica serotype O:8 / biotype 1B (strain NCTC 13174 / 8081).